The primary structure comprises 216 residues: MIHLEGITKSFGSLQVLKGIDLEITQGEVVSIVGPSGAGKTTLLQIMGTLDSPDTGMINIDGTNVSRMKEKELSAFRNKHIGFVFQFHQLLPEFTALENVMIPAFIAGVPTKEASMRAMEILDFMGLKERASHKPNELSGGEKQRVAVARALINQPAVILADEPSGSLDSHNKEELHQLFFDLRNRFGQTFVIVTHDEALAKITDRTIHMVDGNII.

The ABC transporter domain occupies 2–216 (IHLEGITKSF…TIHMVDGNII (215 aa)). Residue 34–41 (GPSGAGKT) participates in ATP binding.

The protein belongs to the ABC transporter superfamily. Lipoprotein translocase (TC 3.A.1.125) family. The complex is composed of two ATP-binding proteins (LolD) and two transmembrane proteins (LolC and LolE).

The protein localises to the cell inner membrane. Part of the ABC transporter complex LolCDE involved in the translocation of mature outer membrane-directed lipoproteins, from the inner membrane to the periplasmic chaperone, LolA. Responsible for the formation of the LolA-lipoprotein complex in an ATP-dependent manner. The chain is Lipoprotein-releasing system ATP-binding protein LolD from Bacteroides fragilis (strain YCH46).